The following is a 130-amino-acid chain: Ribonuclease P protein component (130 aa).

The protein belongs to the RnpA family. In terms of assembly, consists of a catalytic RNA component (M1 or rnpB) and a protein subunit.

The enzyme catalyses Endonucleolytic cleavage of RNA, removing 5'-extranucleotides from tRNA precursor.. RNaseP catalyzes the removal of the 5'-leader sequence from pre-tRNA to produce the mature 5'-terminus. It can also cleave other RNA substrates such as 4.5S RNA. The protein component plays an auxiliary but essential role in vivo by binding to the 5'-leader sequence and broadening the substrate specificity of the ribozyme. This Azotobacter vinelandii (strain DJ / ATCC BAA-1303) protein is Ribonuclease P protein component.